Consider the following 416-residue polypeptide: STAM-binding protein-like (416 aa).

The interval 214 to 244 (SYGTVQPHPPAVDRSLKPSSYGSNSSGVTSD) is disordered. Over residues 230 to 243 (KPSSYGSNSSGVTS) the composition is skewed to low complexity. One can recognise an MPN domain in the interval 249 to 380 (VKIPRDVCCK…LTDYGMKEIG (132 aa)). Zn(2+) is bound by residues histidine 327, histidine 329, aspartate 340, histidine 342, cysteine 382, histidine 388, and histidine 390. The JAMM motif motif lies at 327–340 (HTHPTQTAFLSSVD).

This sequence belongs to the peptidase M67C family. Zn(2+) is required as a cofactor.

Functionally, zinc metalloprotease that specifically cleaves 'Lys-63'-linked polyubiquitin chains. Does not cleave 'Lys-48'-linked polyubiquitin chains. Functions at the endosome and is able to oppose the ubiquitin-dependent sorting of receptors to lysosomes. This Xenopus laevis (African clawed frog) protein is STAM-binding protein-like (stambp).